The primary structure comprises 216 residues: ATP synthase subunit C lysine N-methyltransferase (216 aa).

M1 is subject to N-acetylmethionine. Residues 1–12 (MERGETPEEERQ) are compositionally biased toward basic and acidic residues. The interval 1–25 (MERGETPEEERQSGCVLPTSPESDS) is disordered. Residues 31-50 (WGFLITGVIGGALVTVYAVT) traverse the membrane as a helical segment. The tract at residues 51-85 (TPFIAPALRKVCLPFVPATSRQVENVVKMLQHRRG) is required for mitochondrial location.

Belongs to the ANT/ATPSC lysine N-methyltransferase family.

The protein localises to the mitochondrion membrane. The catalysed reaction is L-lysyl-[protein] + 3 S-adenosyl-L-methionine = N(6),N(6),N(6)-trimethyl-L-lysyl-[protein] + 3 S-adenosyl-L-homocysteine + 3 H(+). Its function is as follows. Mitochondrial protein-lysine N-methyltransferase that trimethylates ATP synthase subunit C, ATP5MC1 and ATP5MC2. Trimethylation is required for proper incorporation of the C subunit into the ATP synthase complex and mitochondrial respiration. Promotes chronic pain. Involved in persistent inflammatory and neuropathic pain: methyltransferase activity in the mitochondria of sensory neurons promotes chronic pain via a pathway that depends on the production of reactive oxygen species (ROS) and on the engagement of spinal cord microglia. This Rattus norvegicus (Rat) protein is ATP synthase subunit C lysine N-methyltransferase (Atpsckmt).